The following is a 325-amino-acid chain: GMP reductase (325 aa).

The active-site Thioimidate intermediate is the Cys173. Residue 202–225 (IIADGGIRHHGDIAKSVRFGAAMV) participates in NADP(+) binding.

Belongs to the IMPDH/GMPR family. GuaC type 2 subfamily.

The catalysed reaction is IMP + NH4(+) + NADP(+) = GMP + NADPH + 2 H(+). Catalyzes the irreversible NADPH-dependent deamination of GMP to IMP. It functions in the conversion of nucleobase, nucleoside and nucleotide derivatives of G to A nucleotides, and in maintaining the intracellular balance of A and G nucleotides. This is GMP reductase from Leptothrix cholodnii (strain ATCC 51168 / LMG 8142 / SP-6) (Leptothrix discophora (strain SP-6)).